A 36-amino-acid polypeptide reads, in one-letter code: Photosystem I reaction center subunit VIII (36 aa).

Residues 9-29 (ILVPLVGLVFPAVTMASLFLY) traverse the membrane as a helical segment.

Belongs to the PsaI family.

The protein resides in the plastid. It is found in the chloroplast thylakoid membrane. May help in the organization of the PsaL subunit. This Staurastrum punctulatum (Green alga) protein is Photosystem I reaction center subunit VIII.